A 211-amino-acid chain; its full sequence is Xanthine phosphoribosyltransferase (211 aa).

Residues L31 and N38 each contribute to the xanthine site. 138-142 (ANGRT) contacts 5-phospho-alpha-D-ribose 1-diphosphate. Residue K166 coordinates xanthine.

The protein belongs to the purine/pyrimidine phosphoribosyltransferase family. Xpt subfamily. Homodimer.

The protein resides in the cytoplasm. The enzyme catalyses XMP + diphosphate = xanthine + 5-phospho-alpha-D-ribose 1-diphosphate. The protein operates within purine metabolism; XMP biosynthesis via salvage pathway; XMP from xanthine: step 1/1. In terms of biological role, converts the preformed base xanthine, a product of nucleic acid breakdown, to xanthosine 5'-monophosphate (XMP), so it can be reused for RNA or DNA synthesis. The polypeptide is Xanthine phosphoribosyltransferase (Chloroflexus aurantiacus (strain ATCC 29364 / DSM 637 / Y-400-fl)).